Here is a 420-residue protein sequence, read N- to C-terminus: Glucose-1-phosphate adenylyltransferase (420 aa).

Residues tyrosine 107, glycine 172, 187 to 188, and serine 205 each bind alpha-D-glucose 1-phosphate; that span reads EK.

This sequence belongs to the bacterial/plant glucose-1-phosphate adenylyltransferase family. As to quaternary structure, homotetramer.

The catalysed reaction is alpha-D-glucose 1-phosphate + ATP + H(+) = ADP-alpha-D-glucose + diphosphate. Its pathway is glycan biosynthesis; glycogen biosynthesis. Its function is as follows. Involved in the biosynthesis of ADP-glucose, a building block required for the elongation reactions to produce glycogen. Catalyzes the reaction between ATP and alpha-D-glucose 1-phosphate (G1P) to produce pyrophosphate and ADP-Glc. The protein is Glucose-1-phosphate adenylyltransferase of Rhizobium radiobacter (Agrobacterium tumefaciens).